An 80-amino-acid polypeptide reads, in one-letter code: Large ribosomal subunit protein bL31B (80 aa).

The protein belongs to the bacterial ribosomal protein bL31 family. Type B subfamily. As to quaternary structure, part of the 50S ribosomal subunit.

The protein is Large ribosomal subunit protein bL31B of Streptococcus thermophilus (strain CNRZ 1066).